The primary structure comprises 288 residues: Borealin (288 aa).

Residues 1 to 58 (MAPKKRSSRGTRTNTLRSRKLASFLKDFDREVQVRTKQIESDRQTLLKEVENLYNIEV) form a required for interaction with INCENP region. Residues 1 to 88 (MAPKKRSSRG…NRQALEEAAT (88 aa)) form a required for centromere localization region. The segment at 1–149 (MAPKKRSSRG…RKSHKNLRSA (149 aa)) is required for interaction with SENP3. Residues 10–109 (GTRTNTLRSR…TAEAIQTPLK (100 aa)) form a required to form a minimal CPC core complex that localizes to the central spindle and midbody and properly executes the role of the CPC during cytokinesis region. A required for interaction with INCENP and BIRC5 region spans residues 20-78 (KLASFLKDFDREVQVRTKQIESDRQTLLKEVENLYNIEVLRLPKALQVMKWLDYFALGG). A Phosphothreonine; by TTK modification is found at T88. At R91 the chain carries Citrulline. T94 is subject to Phosphothreonine; by TTK. T106 is subject to Phosphothreonine. At S110 the chain carries Phosphoserine. The span at 124–134 (KEEEEDEEEEG) shows a compositional bias: acidic residues. Residues 124 to 173 (KEEEEDEEEEGGGGGGRKSHKNLRSARVKRCPPSKKRTQSIQGRSRSKRL) form a disordered region. The span at 140–161 (RKSHKNLRSARVKRCPPSKKRT) shows a compositional bias: basic residues. K144 participates in a covalent cross-link: Glycyl lysine isopeptide (Lys-Gly) (interchain with G-Cter in SUMO2). Residue S174 is modified to Phosphoserine; by AURKB. 2 positions are modified to phosphothreonine: T197 and T212. Residues S227, S232, S246, and S252 each carry the phosphoserine modification.

This sequence belongs to the borealin family. In terms of assembly, may form homooligomers and homodimers. Component of the chromosomal passenger complex (CPC) composed of at least BIRC5/survivin, CDCA8/borealin, INCENP, AURKB or AURKC; in the complex forms a triple-helix bundle-based subcomplex with INCENP and BIRC5. Interacts with SENP3, UBE2I and RANBP2. Interacts (phosphorylated) with SGO1 and SGO2; the association is dependent on CDK1. In terms of processing, phosphorylated by TTK, essentially at Thr-88 and Thr-94. Phosphorylation (probably by CDK1) promotes targeting of the CPC to centromeric DNA. Post-translationally, sumoylated by UBE2I and RANBP2. Desumoylated by SENP3 through the removal of SUMO2 and SUMO3. Citrullinated by PADI4.

The protein resides in the nucleus. Its subcellular location is the nucleolus. It is found in the cytoplasm. The protein localises to the chromosome. It localises to the centromere. The protein resides in the cytoskeleton. Its subcellular location is the spindle. In terms of biological role, component of the chromosomal passenger complex (CPC), a complex that acts as a key regulator of mitosis. The CPC complex has essential functions at the centromere in ensuring correct chromosome alignment and segregation and is required for chromatin-induced microtubule stabilization and spindle assembly. In the complex, it may be required to direct the CPC to centromeric DNA. This is Borealin (Cdca8) from Rattus norvegicus (Rat).